The sequence spans 223 residues: Large ribosomal subunit protein uL3 (223 aa).

This sequence belongs to the universal ribosomal protein uL3 family. Part of the 50S ribosomal subunit. Forms a cluster with proteins L14 and L19.

One of the primary rRNA binding proteins, it binds directly near the 3'-end of the 23S rRNA, where it nucleates assembly of the 50S subunit. This chain is Large ribosomal subunit protein uL3, found in Nocardioides sp. (strain ATCC BAA-499 / JS614).